We begin with the raw amino-acid sequence, 145 residues long: Protein FAM216B (145 aa).

Positions 92–121 (TKRASAKAGPHRTVPQRAAGRTRTQPSARP) are disordered.

This sequence belongs to the FAM216 family.

The chain is Protein FAM216B (FAM216B) from Bos taurus (Bovine).